The chain runs to 336 residues: F420-dependent glucose-6-phosphate dehydrogenase (336 aa).

Aspartate 39 contributes to the coenzyme F420-(gamma-Glu)n binding site. The active-site Proton donor is the histidine 40. Residues threonine 76 and 107 to 108 (TG) each bind coenzyme F420-(gamma-Glu)n. Residue glutamate 109 is the Proton acceptor of the active site. Coenzyme F420-(gamma-Glu)n-binding positions include asparagine 112, 177 to 178 (GG), and 180 to 181 (AV). Residues threonine 195, lysine 198, lysine 259, and arginine 283 each contribute to the substrate site.

It belongs to the F420-dependent glucose-6-phosphate dehydrogenase family. As to quaternary structure, homodimer.

It carries out the reaction oxidized coenzyme F420-(gamma-L-Glu)(n) + D-glucose 6-phosphate + H(+) = 6-phospho-D-glucono-1,5-lactone + reduced coenzyme F420-(gamma-L-Glu)(n). Functionally, catalyzes the coenzyme F420-dependent oxidation of glucose 6-phosphate (G6P) to 6-phosphogluconolactone. Appears to have a role in resistance to oxidative stress, via its consumption of G6P that serves as a source of reducing power to combat oxidative stress in mycobacteria. More precisely, is likely involved in a F420-dependent anti-oxidant mechanism that protects M.tuberculosis against oxidative stress and bactericidal agents. Its function is as follows. Is essential for the bioreductive activation of the bicyclic 4-nitroimidazole prodrug PA-824 (nitroimidazo-oxazine) developed for anti-tuberculosis therapy against both replicating and persistent bacteria. It does not interact directly with PA-824 but, rather, provides reduced F420 to the deazaflavin-dependent nitroreductase Ddn, which in turn activates PA-824. This Mycobacterium tuberculosis (strain CDC 1551 / Oshkosh) protein is F420-dependent glucose-6-phosphate dehydrogenase (fgd1).